The primary structure comprises 630 residues: Polyphenol oxidase A, chloroplastic (630 aa).

The interval 1-25 (MASLCSNSSSTSLKTPFTSSTTCLS) is disordered. Residues 1–87 (MASLCSNSSS…ANAIPLAASA (87 aa)) constitute a chloroplast transit peptide. 2 cysteine pairs are disulfide-bonded: Cys98–Cys114 and Cys113–Cys181. Cu cation-binding residues include His180, His198, His207, His328, His332, and His370. Positions 184–198 (CNGGYSIDGKVLQVH) form a cross-link, 2'-(S-cysteinyl)-histidine (Cys-His).

The protein belongs to the tyrosinase family. It depends on Cu(2+) as a cofactor.

Its subcellular location is the plastid. It is found in the chloroplast thylakoid lumen. It catalyses the reaction 2 catechol + O2 = 2 1,2-benzoquinone + 2 H2O. In terms of biological role, catalyzes the oxidation of mono- and o-diphenols to o-diquinones. The protein is Polyphenol oxidase A, chloroplastic of Solanum lycopersicum (Tomato).